The sequence spans 744 residues: Spalt-like protein sem-4 (744 aa).

Residues 6–32 (AEMAAVSSRRKQSKPRRMSGEGDAMMS) form a disordered region. The span at 13 to 22 (SRRKQSKPRR) shows a compositional bias: basic residues. C2H2-type zinc fingers lie at residues 99 to 124 (SSCP…LDAH), 305 to 327 (NQCI…YRTH), 333 to 355 (FKCK…MGVH), and 411 to 433 (QQCP…ITEH). The span at 487–497 (KNDSSPNTDTS) shows a compositional bias: polar residues. Disordered stretches follow at residues 487-530 (KNDS…RQDI) and 542-562 (KLEE…PKNE). Residues 499–509 (VEEKITRDDPP) show a composition bias toward basic and acidic residues. The span at 513 to 525 (SLSPSNSSDSSSS) shows a compositional bias: low complexity. The span at 551–561 (QQVSTTPNPKN) shows a compositional bias: polar residues. C2H2-type zinc fingers lie at residues 589–611 (HQCG…MRTH), 617–639 (FKCD…MGTH), and 701–723 (TVCS…LKEH). Positions 725-744 (NNGSSAAPTPLASAATPPPS) are disordered. The segment covering 728 to 744 (SSAAPTPLASAATPPPS) has biased composition (low complexity).

It belongs to the sal C2H2-type zinc-finger protein family.

Its subcellular location is the nucleus. Transcription factor, involved in positive and negative modulation of transcription. Binds to multiple DNA sequence motifs in the regulatory elements of target genes, including homeobox selector egl-5 and LIM homeobox mec-3. Involved in cell-fate regulation in multiple lineages, including neuronal, mesodermal and vulval. Required to regulate the fate of PLM touch receptor neurons, acting via negative modulation of transcription of egl-5 and mec-3. May modulate gene expression by interacting with different transcription factors during neuronal and mesodermal cell development. Promotes the proliferative sex myoblast (SM) fate, in a cell autonomous manner, acting via the SoxC transcription factor sem-2. Involved in vulval cell-fate determination, acting by regulating expression of homeobox protein lin-39, and may link lin-39 to incoming signaling pathways. Plays a role in detoxification of reactive oxygen species (ROS), by regulating expression of transcription factor skn-1 and the phase II detoxification genes. The sequence is that of Spalt-like protein sem-4 from Caenorhabditis elegans.